The sequence spans 394 residues: Queuine tRNA-ribosyltransferase accessory subunit 2 (394 aa).

C336, C338, C341, and H367 together coordinate Zn(2+).

The protein belongs to the queuine tRNA-ribosyltransferase family. QTRT2 subfamily. As to quaternary structure, heterodimer of a catalytic subunit and an accessory subunit. Zn(2+) is required as a cofactor.

Its subcellular location is the cytoplasm. Functionally, non-catalytic subunit of the queuine tRNA-ribosyltransferase (TGT) that catalyzes the base-exchange of a guanine (G) residue with queuine (Q) at position 34 (anticodon wobble position) in tRNAs with GU(N) anticodons (tRNA-Asp, -Asn, -His and -Tyr), resulting in the hypermodified nucleoside queuosine (7-(((4,5-cis-dihydroxy-2-cyclopenten-1-yl)amino)methyl)-7-deazaguanosine). The sequence is that of Queuine tRNA-ribosyltransferase accessory subunit 2 from Ixodes scapularis (Black-legged tick).